The primary structure comprises 56 residues: MAAKGGREKIKLESTAGTGHFYTTTKNKKTMPEKMAIMKFDPKARKHVTYKEIKLK.

The protein belongs to the bacterial ribosomal protein bL33 family.

In Delftia acidovorans (strain DSM 14801 / SPH-1), this protein is Large ribosomal subunit protein bL33.